A 669-amino-acid chain; its full sequence is MKIFVGNVDGADTTPEELAALFAPYGTVMSCAVMKQFAFVHMRENAGAVRAIEALHGHELRPGRALVVEMSRPRPLNTWKIFVGNVSAACTSQELRSLFERRGRVIECDVVKDYAFVHMEKEADAKAAIAQLNGKEVKGKRINVELSTKGQKKGPGLAIQSGDKTKKPGAGDTAFPGTGGFSATFDYQQAFGNSTGGFDGQARQPTPPFFGRDRSPLRRSPPRASYVAPLTAQPATYRAQPSVSLGAAYRAQPSASLGVGYRTQPMTAQAASYRAQPSVSLGAPYRGQLASPSSQSAAASSLGPYGGAQPSASALSSYGGQPAAASSLNSYGAQGSSLASYGNQPSSYGAQAASSYGVRAAASSYNTQGAANSLGSYGAQAASYGAQSAASSLAYGAQAASYNAQPSASYNAQSAPYAAQQAASYSSQPAAYVAQPATAAAYASQPAAYAAQATTPMAGSYGAQPVVQTQLNSYGAQASMGLSGSYGAQSAAAATGSYGAAAAYGAQPSATLAAPYRTQSSASLAASYAAQQHPQAAASYRGQPGNAYDGTGQPSAAYLSMSQGVVANANSTPPPYERTRLSPPRASYDDPYKKAVAMSKRYGSDRRLAELSDYRRLSESQLSFRRSPTKSSLDYRRLPDAHSDYARYSGSYNDYLRAAQMHSGYQRRM.

2 consecutive RRM domains span residues 1 to 73 (MKIF…MSRP) and 79 to 149 (WKIF…LSTK). Glycyl lysine isopeptide (Lys-Gly) (interchain with G-Cter in SUMO2) cross-links involve residues Lys126, Lys135, Lys138, Lys149, and Lys153. Disordered regions lie at residues 148–175 (TKGQ…DTAF) and 193–232 (NSTG…PLTA). Ser161 bears the Phosphoserine mark. N6-acetyllysine; alternate is present on Lys164. A Glycyl lysine isopeptide (Lys-Gly) (interchain with G-Cter in SUMO2); alternate cross-link involves residue Lys164. At Thr206 the chain carries Phosphothreonine. Phosphoserine is present on residues Ser220, Ser242, Ser244, Ser256, Ser272, and Ser280. The segment at 284-303 (PYRGQLASPSSQSAAASSLG) is disordered. The span at 287-303 (GQLASPSSQSAAASSLG) shows a compositional bias: low complexity. A TRBP-interacting domain; interaction with STIL region spans residues 307 to 354 (GAQPSASALSSYGGQPAAASSLNSYGAQGSSLASYGNQPSSYGAQAAS). Phosphoserine occurs at positions 520, 523, 527, and 562. The tract at residues 569-590 (ANSTPPPYERTRLSPPRASYDD) is disordered. Thr572 carries the phosphothreonine modification. A Phosphoserine modification is found at Ser582. Lys600 participates in a covalent cross-link: Glycyl lysine isopeptide (Lys-Gly) (interchain with G-Cter in SUMO2). 6 positions are modified to phosphoserine: Ser618, Ser620, Ser623, Ser627, Ser643, and Ser649.

Interacts with NCOA6, CITED1 and XRCC5/KU86. Interacts with SS18. Interacts with STIL and interferes with its interaction with CPAP. Interacts with gamma-tubulin. Part of the HDP-RNP complex composed of at least HEXIM1, PRKDC, XRCC5, XRCC6, paraspeckle proteins (SFPQ, NONO, PSPC1, RBM14, and MATR3) and NEAT1 RNA.

It is found in the nucleus. The protein resides in the nucleolus. Its subcellular location is the cytoplasm. Its function is as follows. May function as a nuclear receptor coactivator, enhancing transcription through other coactivators such as NCOA6 and CITED1. Regulates centriole biogenesis by suppressing the formation of aberrant centriolar protein complexes in the cytoplasm and thus preserving mitotic spindle integrity. Prevents the formation of the STIL-CPAP complex (which can induce the formation of aberrant centriolar protein complexes) by interfering with the interaction of STIL with CPAP. Plays a role in the regulation of DNA virus-mediated innate immune response by assembling into the HDP-RNP complex, a complex that serves as a platform for IRF3 phosphorylation and subsequent innate immune response activation through the cGAS-STING pathway. This Bos taurus (Bovine) protein is RNA-binding protein 14 (RBM14).